A 612-amino-acid chain; its full sequence is Dihydroxy-acid dehydratase (612 aa).

D81 serves as a coordination point for Mg(2+). C122 is a [2Fe-2S] cluster binding site. Mg(2+) is bound by residues D123 and K124. Residue K124 is modified to N6-carboxylysine. Position 195 (C195) interacts with [2Fe-2S] cluster. A Mg(2+)-binding site is contributed by E492. The active-site Proton acceptor is S518.

Belongs to the IlvD/Edd family. As to quaternary structure, homodimer. [2Fe-2S] cluster serves as cofactor. Requires Mg(2+) as cofactor.

It carries out the reaction (2R)-2,3-dihydroxy-3-methylbutanoate = 3-methyl-2-oxobutanoate + H2O. The enzyme catalyses (2R,3R)-2,3-dihydroxy-3-methylpentanoate = (S)-3-methyl-2-oxopentanoate + H2O. The protein operates within amino-acid biosynthesis; L-isoleucine biosynthesis; L-isoleucine from 2-oxobutanoate: step 3/4. Its pathway is amino-acid biosynthesis; L-valine biosynthesis; L-valine from pyruvate: step 3/4. Functions in the biosynthesis of branched-chain amino acids. Catalyzes the dehydration of (2R,3R)-2,3-dihydroxy-3-methylpentanoate (2,3-dihydroxy-3-methylvalerate) into 2-oxo-3-methylpentanoate (2-oxo-3-methylvalerate) and of (2R)-2,3-dihydroxy-3-methylbutanoate (2,3-dihydroxyisovalerate) into 2-oxo-3-methylbutanoate (2-oxoisovalerate), the penultimate precursor to L-isoleucine and L-valine, respectively. This is Dihydroxy-acid dehydratase from Kocuria rhizophila (strain ATCC 9341 / DSM 348 / NBRC 103217 / DC2201).